A 1828-amino-acid polypeptide reads, in one-letter code: Dedicator of cytokinesis protein 2 (1828 aa).

An SH3 domain is found at 8 to 69 (DKERHGVAIY…PTSFIHLKEV (62 aa)). Position 304 is an N6-acetyllysine (Lys304). Residues 423-607 (RNDIYITLLQ…DVFSISTLVC (185 aa)) form the C2 DOCK-type domain. A phosphoserine mark is found at Ser588 and Ser593. Position 738 is an N6-acetyllysine (Lys738). Positions 1210-1621 (YKDNNREEMY…VEKEYGVREM (412 aa)) constitute a DOCKER domain. Positions 1652 to 1703 (SDCSTPSKVPAESFDLESAPPKTPKVEEEPISPGSTLPEVKLRRSKKRTKRS) are disordered. Phosphoserine occurs at positions 1683, 1704, 1729, and 1782.

This sequence belongs to the DOCK family. As to quaternary structure, homodimer. Interacts with RAC1 and RAC2. Interacts with CRKL and VAV. Interacts with CD3Z. Specifically expressed in hematopoietic cells.

It is found in the endomembrane system. The protein resides in the cytoplasm. Its subcellular location is the cytoskeleton. Functionally, involved in cytoskeletal rearrangements required for lymphocyte migration in response of chemokines. Activates RAC1 and RAC2, but not CDC42, by functioning as a guanine nucleotide exchange factor (GEF), which exchanges bound GDP for free GTP. May also participate in IL2 transcriptional activation via the activation of RAC2. The polypeptide is Dedicator of cytokinesis protein 2 (Dock2) (Mus musculus (Mouse)).